The following is a 170-amino-acid chain: Large ribosomal subunit protein bL17 (170 aa).

The protein belongs to the bacterial ribosomal protein bL17 family. In terms of assembly, part of the 50S ribosomal subunit. Contacts protein L32.

This is Large ribosomal subunit protein bL17 from Azobacteroides pseudotrichonymphae genomovar. CFP2.